Reading from the N-terminus, the 271-residue chain is Mannosyl-3-phosphoglycerate phosphatase (271 aa).

The Nucleophile role is filled by D13. Mg(2+)-binding residues include D13, D15, and D214.

Belongs to the HAD-like hydrolase superfamily. MPGP family. Mg(2+) is required as a cofactor.

The protein resides in the cytoplasm. It carries out the reaction 2-O-(alpha-D-mannosyl)-3-phosphoglycerate + H2O = (2R)-2-O-(alpha-D-mannosyl)-glycerate + phosphate. The chain is Mannosyl-3-phosphoglycerate phosphatase from Escherichia coli O7:K1 (strain IAI39 / ExPEC).